The sequence spans 494 residues: Cobyric acid synthase (494 aa).

The GATase cobBQ-type domain maps to 248 to 444 (EIEIAIIKLP…LHGIFENDEW (197 aa)). Cys-329 functions as the Nucleophile in the catalytic mechanism. Residue His-436 is part of the active site.

Belongs to the CobB/CobQ family. CobQ subfamily.

The protein operates within cofactor biosynthesis; adenosylcobalamin biosynthesis. Its function is as follows. Catalyzes amidations at positions B, D, E, and G on adenosylcobyrinic A,C-diamide. NH(2) groups are provided by glutamine, and one molecule of ATP is hydrogenolyzed for each amidation. This chain is Cobyric acid synthase, found in Prochlorococcus marinus (strain NATL1A).